The chain runs to 871 residues: Tegument protein UL47 homolog (871 aa).

Residues 1–212 form a disordered region; sequence MDQHHGARGG…DEDDMEVIRD (212 aa). Residues 13 to 33 carry the Nuclear localization signal motif; the sequence is IRRPRRSIESRSHPFRATGNT. Composition is skewed to polar residues over residues 30–41 and 59–81; these read TGNTQRTYSTPR and EQASNQDESSNPSTSNAQQSTSF. 3 stretches are compositionally biased toward acidic residues: residues 114–134, 146–155, and 185–207; these read SSSEEEEEEGPAQAPLDEEDQ, SSDENDEEED, and SESETDIDAEEEEEDDEDDEDDM.

The protein belongs to the alphaherpesvirinae HHV-1 UL47 family. In terms of assembly, interacts with US3 kinase. Interacts with UL31 and UL34; these interactions seem important for efficient virion nuclear egress. Interacts with UL41/VHS. Phosphorylated by US3. This phosphorylation is required for proper nuclear localization.

Its subcellular location is the virion tegument. It is found in the host nucleus. It localises to the host cytoplasm. Tegument protein that can bind to various RNA transcripts. Plays a role in the attenuation of selective viral and cellular mRNA degradation by modulating the activity of host shutoff RNase UL41/VHS. Also plays a role in the primary envelopment of virions in the perinuclear space, probably by interacting with two nuclear egress proteins UL31 and UL34. This is Tegument protein UL47 homolog from Equine herpesvirus 1 (strain V592) (EHV-1).